The chain runs to 148 residues: Endothelial differentiation-related factor 1 (148 aa).

The residue at position 2 (alanine 2) is an N-acetylalanine. Residue serine 4 is modified to Phosphoserine. Lysine 25 is modified (N6-methyllysine). Basic and acidic residues predominate over residues 33-42 (RRGEDVETSK). The tract at residues 33–66 (RRGEDVETSKKWAAGQNKQHSITKNTAKLDRETE) is disordered. The interval 37 to 113 (DVETSKKWAA…QVIADYESGR (77 aa)) is interaction with NR5A2, PPARG and NR1H3. Residues 48 to 58 (QNKQHSITKNT) are compositionally biased toward polar residues. The interval 69-108 (HHDRVTLEVGKVIQQGRQSKGLTQKDLATKINEKPQVIAD) is interaction with TBP and NR5A1. Positions 81-88 (IQQGRQSK) match the IQ motif motif. The 55-residue stretch at 81–135 (IQQGRQSKGLTQKDLATKINEKPQVIADYESGRAIPNNQVLGKIERAIGLKLRGK) folds into the HTH cro/C1-type domain. The segment at residues 92-111 (QKDLATKINEKPQVIADYES) is a DNA-binding region (H-T-H motif).

Interacts with TBP and the transcription factor IID (TFIID) complex, NR5A2, NR1H3 and PPARG. Interaction with TBP is regulated by phosphorylation. Binds NR5A1, ATF1, FOS and JUN via their conserved basic region. Binding to calmodulin is regulated by calcium and phosphorylation of the IQ motif. In terms of processing, phosphorylated (by PKA and PKC). Expressed in brain, liver, lung, kidney and heart (at protein level). Ubiquitously expressed. More abundant in heart, pancreas, liver, intestine and adipose tissues.

Its subcellular location is the cytoplasm. It localises to the nucleus. Functionally, transcriptional coactivator stimulating NR5A1 and ligand-dependent NR1H3/LXRA and PPARG transcriptional activities. Enhances the DNA-binding activity of ATF1, ATF2, CREB1 and NR5A1. Regulates nitric oxid synthase activity probably by sequestering calmodulin in the cytoplasm. May function in endothelial cells differentiation, hormone-induced cardiomyocytes hypertrophy and lipid metabolism. The protein is Endothelial differentiation-related factor 1 (EDF1) of Homo sapiens (Human).